We begin with the raw amino-acid sequence, 340 residues long: tRNA N6-adenosine threonylcarbamoyltransferase (340 aa).

Fe cation contacts are provided by histidine 111 and histidine 115. Residues 133-137 (VVSGG), aspartate 166, glycine 179, aspartate 183, and asparagine 274 each bind substrate. Aspartate 299 is a Fe cation binding site.

The protein belongs to the KAE1 / TsaD family. The cofactor is Fe(2+).

It localises to the cytoplasm. The catalysed reaction is L-threonylcarbamoyladenylate + adenosine(37) in tRNA = N(6)-L-threonylcarbamoyladenosine(37) in tRNA + AMP + H(+). Required for the formation of a threonylcarbamoyl group on adenosine at position 37 (t(6)A37) in tRNAs that read codons beginning with adenine. Is involved in the transfer of the threonylcarbamoyl moiety of threonylcarbamoyl-AMP (TC-AMP) to the N6 group of A37, together with TsaE and TsaB. TsaD likely plays a direct catalytic role in this reaction. The chain is tRNA N6-adenosine threonylcarbamoyltransferase from Brachyspira hyodysenteriae (strain ATCC 49526 / WA1).